A 551-amino-acid polypeptide reads, in one-letter code: Calcium-dependent protein kinase 3 (551 aa).

The tract at residues 1–57 (MGNCCRSPAAAAREDVKSSHFPASAGKKKPHQARNGGVGGGGGGGGGGGGGGGAGQK) is disordered. A lipid anchor (N-myristoyl glycine) is attached at glycine 2. Residues 36-55 (GGVGGGGGGGGGGGGGGGAG) are compositionally biased toward gly residues. Residues 77 to 335 (YALDRELGRG…AKQVLEHPWL (259 aa)) form the Protein kinase domain. ATP-binding positions include 83–91 (LGRGEFGVT) and lysine 106. Aspartate 201 (proton acceptor) is an active-site residue. Positions 341–371 (APNVPLGDIVKSRLKQFSRMNRFKRRALRVI) are autoinhibitory domain. EF-hand domains lie at 378-413 (EEVE…FGSH), 414-449 (LAES…LQRM), 450-485 (ANDE…DGAG), and 486-521 (DSME…GTDW). Ca(2+) is bound by residues aspartate 391, aspartate 393, aspartate 395, glutamate 402, aspartate 427, asparagine 429, glutamate 438, aspartate 463, aspartate 465, asparagine 467, tyrosine 469, glutamate 474, aspartate 499, aspartate 501, aspartate 503, lysine 505, and glutamate 510.

It belongs to the protein kinase superfamily. Ser/Thr protein kinase family. CDPK subfamily. As to expression, expressed in roots and developing seeds.

The protein localises to the membrane. The catalysed reaction is L-seryl-[protein] + ATP = O-phospho-L-seryl-[protein] + ADP + H(+). It carries out the reaction L-threonyl-[protein] + ATP = O-phospho-L-threonyl-[protein] + ADP + H(+). With respect to regulation, activated by calcium. Autophosphorylation may play an important role in the regulation of the kinase activity. In terms of biological role, may play a role in signal transduction pathways that involve calcium as a second messenger. The chain is Calcium-dependent protein kinase 3 from Oryza sativa subsp. japonica (Rice).